The primary structure comprises 289 residues: Probable aquaporin PIP2-6 (289 aa).

Met1 bears the N-acetylmethionine mark. At 1 to 38 (MTKDELTEEESLSGKDYLDPPPVKTFEVRELKKWSFYR) the chain is on the cytoplasmic side. Position 7 is a phosphothreonine (Thr7). Ser11 is subject to Phosphoserine. A helical membrane pass occupies residues 39-59 (AVIAEFIATLLFLYVTVLTVI). Residues 60-80 (GFKSQTDINAGGGACASVGLL) lie on the Extracellular side of the membrane. Residues 81-101 (GISWAFGGMIFILVYCTAGIS) form a helical membrane-spanning segment. Over 102–124 (GGHINPAVTFGLFLASKVSLVRA) the chain is Cytoplasmic. The NPA 1 motif lies at 106-108 (NPA). The helical transmembrane segment at 125-145 (VSYMVAQCLGATCGVGLVKVF) threads the bilayer. Residues 146–165 (QSTYYNRYGGGANMLSDGYN) lie on the Extracellular side of the membrane. The chain crosses the membrane as a helical span at residues 166–186 (VGVGVGAEIIGTFVLVYTVFS). The Cytoplasmic segment spans residues 187-200 (ATDPKRNARDSHIP). Residues 201-221 (VLAPLPIGFSVFMVHLATIPI) traverse the membrane as a helical segment. The Extracellular segment spans residues 222 to 248 (TGTGINPARSFGAAVIYNNQKAWDDQW). The NPA 2 motif lies at 227 to 229 (NPA). The chain crosses the membrane as a helical span at residues 249–269 (IFWVGPFVGAAIAAFYHQFVL). The Cytoplasmic segment spans residues 270-289 (RAGAMKAYGSVRSQLHELHA). Residues Ser279 and Ser282 each carry the phosphoserine modification.

The protein belongs to the MIP/aquaporin (TC 1.A.8) family. PIP (TC 1.A.8.11) subfamily. In terms of tissue distribution, expressed above ground, and in flower buds.

The protein localises to the cell membrane. Aquaporins facilitate the transport of water and small neutral solutes across cell membranes. In Arabidopsis thaliana (Mouse-ear cress), this protein is Probable aquaporin PIP2-6 (PIP2-6).